The sequence spans 139 residues: MANSSSGMAVDDECKLKFMELKAKRNFRFIVFKIEEKVQQVTVERLGQPNESYDDFTECLPPNECRYAVFDFDFVTDENCQKSKIFFISWSPDTSRVRSKMLYASTKDRFKRELDGIQVELQATDPSEMSMDIIKARAF.

In terms of domain architecture, ADF-H spans 5-139 (SSGMAVDDEC…SMDIIKARAF (135 aa)).

This sequence belongs to the actin-binding proteins ADF family. Preferentially in mature anther.

Functionally, actin-depolymerizing protein. Severs actin filaments (F-actin) and binds to actin monomers. This Lilium longiflorum (Trumpet lily) protein is Actin-depolymerizing factor.